The sequence spans 53 residues: Reg12l (53 aa).

Residues 1-34 (RVLFRSGDQPADQPAERMQDISPEQNPLFHPDKR) constitute a propeptide that is removed on maturation. 3 disulfides stabilise this stretch: Cys-36–Cys-50, Cys-37–Cys-48, and Cys-42–Cys-51.

Belongs to the conotoxin M superfamily. As to expression, expressed by the venom duct.

It localises to the secreted. This chain is Reg12l, found in Conus regius (Crown cone).